Consider the following 544-residue polypeptide: Dynein intermediate chain 1 (544 aa).

6 WD repeats span residues 241–281 (KARS…YPVS), 289–330 (GHLE…RPSE), 342–387 (SQCI…QPSN), 402–441 (VMTS…NQHE), 461–501 (THKA…EAPV), and 506–544 (PDGK…NLAN).

Belongs to the dynein intermediate chain family.

It localises to the cytoplasm. Has a role in meiotic nuclear divsion where it promotes the movement of 'horsetails'. This Schizosaccharomyces pombe (strain 972 / ATCC 24843) (Fission yeast) protein is Dynein intermediate chain 1 (dic1).